The following is a 488-amino-acid chain: GTPase Der (488 aa).

EngA-type G domains lie at 3–166 (PVVA…AEAM) and 199–372 (IKLA…DSAT). GTP-binding positions include 9-16 (GRPNVGKS), 56-60 (DTGGI), 118-121 (NKVD), 205-212 (GKPNVGKS), 252-256 (DTAGV), and 317-320 (NKWD). Residues 373–457 (RRVSTSMLTR…PIQLRFQEGD (85 aa)) form the KH-like domain. The segment at 469 to 488 (MSQERRRKRALSHIKDRKTK) is disordered. Over residues 473-488 (RRRKRALSHIKDRKTK) the composition is skewed to basic residues.

It belongs to the TRAFAC class TrmE-Era-EngA-EngB-Septin-like GTPase superfamily. EngA (Der) GTPase family. Associates with the 50S ribosomal subunit.

GTPase that plays an essential role in the late steps of ribosome biogenesis. This chain is GTPase Der, found in Shewanella putrefaciens (strain CN-32 / ATCC BAA-453).